The sequence spans 105 residues: Oxytocin-neurophysin 1 (105 aa).

C1 and C6 are joined by a disulfide. Residue G9 is modified to Glycine amide. 7 cysteine pairs are disulfide-bonded: C22–C66, C25–C39, C33–C56, C40–C46, C73–C85, C79–C97, and C86–C91.

Belongs to the vasopressin/oxytocin family. In terms of assembly, interacts with oxytocin receptor (Ki=1.5 nM). Interacts with vasopressin V1aR/AVPR1A (Ki=37 nM), V1bR/AVPR1B (Ki=222 nM), and V2R/AVPR2 receptors (Ki=823 nM).

The protein resides in the secreted. Neurophysin 1 specifically binds oxytocin. Functionally, oxytocin causes contraction of the smooth muscle of the uterus and of the mammary gland. Acts by binding to oxytocin receptor (OXTR). This Equus caballus (Horse) protein is Oxytocin-neurophysin 1 (OXT).